Reading from the N-terminus, the 627-residue chain is Glucokinase regulatory protein (627 aa).

SIS domains follow at residues 90–286 (VQEV…QGVV) and 320–499 (VGIS…LLGK). Residues 109-110 (TS), E153, and 179-181 (SVG) each bind beta-D-fructose 1-phosphate. 109–110 (TS) provides a ligand contact to beta-D-fructose 6-phosphate. 179–181 (SVG) contacts beta-D-fructose 6-phosphate. The segment at 199 to 200 (AV) is important for interaction with GCK. E348 lines the beta-D-fructose 1-phosphate pocket. Residues 463–465 (LLF) form an essential for interaction with GCK region. Position 514 (K514) interacts with beta-D-fructose 1-phosphate. K514 serves as a coordination point for beta-D-fructose 6-phosphate.

Belongs to the GCKR family. In terms of assembly, interacts (fructose 6-phosphate bound form) with GCK. As to expression, detected in liver (at protein level). Not detected in muscle, brain, heart, testis, intestine or spleen.

The protein localises to the cytoplasm. The protein resides in the nucleus. It localises to the mitochondrion. Its function is as follows. Regulates glucokinase (GCK) by forming an inactive complex with this enzyme. Acts by promoting GCK recruitment to the nucleus, possibly to provide a reserve of GCK that can be quickly released in the cytoplasm after a meal. The affinity of GCKR for GCK is modulated by fructose metabolites: GCKR with bound fructose 6-phosphate has increased affinity for GCK, while GCKR with bound fructose 1-phosphate has strongly decreased affinity for GCK and does not inhibit GCK activity. This Rattus norvegicus (Rat) protein is Glucokinase regulatory protein.